The chain runs to 309 residues: 4-hydroxy-3-methylbut-2-enyl diphosphate reductase (309 aa).

A [4Fe-4S] cluster-binding site is contributed by Cys-12. The (2E)-4-hydroxy-3-methylbut-2-enyl diphosphate site is built by His-41 and His-74. Dimethylallyl diphosphate-binding residues include His-41 and His-74. Isopentenyl diphosphate contacts are provided by His-41 and His-74. A [4Fe-4S] cluster-binding site is contributed by Cys-96. Residue His-124 participates in (2E)-4-hydroxy-3-methylbut-2-enyl diphosphate binding. His-124 contributes to the dimethylallyl diphosphate binding site. His-124 lines the isopentenyl diphosphate pocket. Glu-126 serves as the catalytic Proton donor. Thr-167 provides a ligand contact to (2E)-4-hydroxy-3-methylbut-2-enyl diphosphate. Cys-197 serves as a coordination point for [4Fe-4S] cluster. Residues Ser-225, Ser-226, Asn-227, and Ser-269 each coordinate (2E)-4-hydroxy-3-methylbut-2-enyl diphosphate. Dimethylallyl diphosphate-binding residues include Ser-225, Ser-226, Asn-227, and Ser-269. 4 residues coordinate isopentenyl diphosphate: Ser-225, Ser-226, Asn-227, and Ser-269.

It belongs to the IspH family. Requires [4Fe-4S] cluster as cofactor.

The catalysed reaction is isopentenyl diphosphate + 2 oxidized [2Fe-2S]-[ferredoxin] + H2O = (2E)-4-hydroxy-3-methylbut-2-enyl diphosphate + 2 reduced [2Fe-2S]-[ferredoxin] + 2 H(+). It carries out the reaction dimethylallyl diphosphate + 2 oxidized [2Fe-2S]-[ferredoxin] + H2O = (2E)-4-hydroxy-3-methylbut-2-enyl diphosphate + 2 reduced [2Fe-2S]-[ferredoxin] + 2 H(+). It participates in isoprenoid biosynthesis; dimethylallyl diphosphate biosynthesis; dimethylallyl diphosphate from (2E)-4-hydroxy-3-methylbutenyl diphosphate: step 1/1. It functions in the pathway isoprenoid biosynthesis; isopentenyl diphosphate biosynthesis via DXP pathway; isopentenyl diphosphate from 1-deoxy-D-xylulose 5-phosphate: step 6/6. Catalyzes the conversion of 1-hydroxy-2-methyl-2-(E)-butenyl 4-diphosphate (HMBPP) into a mixture of isopentenyl diphosphate (IPP) and dimethylallyl diphosphate (DMAPP). Acts in the terminal step of the DOXP/MEP pathway for isoprenoid precursor biosynthesis. The polypeptide is 4-hydroxy-3-methylbut-2-enyl diphosphate reductase (Shewanella pealeana (strain ATCC 700345 / ANG-SQ1)).